A 407-amino-acid polypeptide reads, in one-letter code: Arginine biosynthesis bifunctional protein ArgJ (407 aa).

Substrate-binding residues include Thr157, Lys183, Thr194, Glu280, Asn402, and Thr407. The active-site Nucleophile is the Thr194.

This sequence belongs to the ArgJ family. Heterotetramer of two alpha and two beta chains.

It localises to the cytoplasm. It carries out the reaction N(2)-acetyl-L-ornithine + L-glutamate = N-acetyl-L-glutamate + L-ornithine. The catalysed reaction is L-glutamate + acetyl-CoA = N-acetyl-L-glutamate + CoA + H(+). It participates in amino-acid biosynthesis; L-arginine biosynthesis; L-ornithine and N-acetyl-L-glutamate from L-glutamate and N(2)-acetyl-L-ornithine (cyclic): step 1/1. The protein operates within amino-acid biosynthesis; L-arginine biosynthesis; N(2)-acetyl-L-ornithine from L-glutamate: step 1/4. Its function is as follows. Catalyzes two activities which are involved in the cyclic version of arginine biosynthesis: the synthesis of N-acetylglutamate from glutamate and acetyl-CoA as the acetyl donor, and of ornithine by transacetylation between N(2)-acetylornithine and glutamate. The polypeptide is Arginine biosynthesis bifunctional protein ArgJ (Bacillus cereus (strain ATCC 10987 / NRS 248)).